Reading from the N-terminus, the 644-residue chain is N-acetylgalactosaminyltransferase 4 (644 aa).

Over methionine 1 to arginine 13 the chain is Cytoplasmic. A helical; Signal-anchor for type II membrane protein transmembrane segment spans residues lysine 14–glutamate 34. Over arginine 35–lysine 644 the chain is Lumenal. Residues asparagine 157 and asparagine 179 are each glycosylated (N-linked (GlcNAc...) asparagine). The tract at residues leucine 177–proline 288 is catalytic subdomain A. The substrate site is built by aspartate 218 and arginine 249. Aspartate 272 contributes to the Mn(2+) binding site. Serine 273 is a binding site for substrate. Histidine 274 is a binding site for Mn(2+). Positions proline 345–arginine 407 are catalytic subdomain B. Tryptophan 376 lines the substrate pocket. Histidine 404 contacts Mn(2+). A substrate-binding site is contributed by arginine 407. Residues alanine 496–glycine 629 enclose the Ricin B-type lectin domain. Residues cysteine 509 and cysteine 526 are joined by a disulfide bond. N-linked (GlcNAc...) asparagine glycosylation is found at asparagine 529 and asparagine 565. 2 cysteine pairs are disulfide-bonded: cysteine 556/cysteine 573 and cysteine 600/cysteine 617. Asparagine 632 carries an N-linked (GlcNAc...) asparagine glycan.

This sequence belongs to the glycosyltransferase 2 family. GalNAc-T subfamily. The cofactor is Mn(2+). In terms of tissue distribution, expressed in developing oocytes and egg chambers. During embryonic stages 9-11, expressed in the primordium of the foregut, midgut and hindgut. During embryonic stages 12-13, shows specific expression in the proventriculus that continues until the end of embryogenesis. In third instar larvae, ubiquitously expressed in wing, eye-antennal, leg and haltere imaginal disks.

The protein resides in the golgi apparatus membrane. The enzyme catalyses L-seryl-[protein] + UDP-N-acetyl-alpha-D-galactosamine = a 3-O-[N-acetyl-alpha-D-galactosaminyl]-L-seryl-[protein] + UDP + H(+). The catalysed reaction is L-threonyl-[protein] + UDP-N-acetyl-alpha-D-galactosamine = a 3-O-[N-acetyl-alpha-D-galactosaminyl]-L-threonyl-[protein] + UDP + H(+). Its pathway is protein modification; protein glycosylation. Glycopeptide transferase involved in O-linked oligosaccharide biosynthesis, which catalyzes the transfer of an N-acetyl-D-galactosamine residue to an already glycosylated peptide. In contrast to other proteins of the family, it does not act as a peptide transferase that transfers GalNAc onto serine or threonine residue on the protein receptor, but instead requires the prior addition of a GalNAc on a peptide before adding additional GalNAc moieties. Some peptide transferase activity is however not excluded, considering that its appropriate peptide substrate may remain unidentified. Prefers the diglycosylated Muc5AC-3/13 as substrate. In Drosophila melanogaster (Fruit fly), this protein is N-acetylgalactosaminyltransferase 4.